Here is a 407-residue protein sequence, read N- to C-terminus: Cysteine desulfurase (407 aa).

Residue Lys-226 is modified to N6-(pyridoxal phosphate)lysine. The active-site Cysteine persulfide intermediate is the Cys-364.

It belongs to the class-V pyridoxal-phosphate-dependent aminotransferase family. Csd subfamily. Homodimer. Interacts with SufE and the SufBCD complex composed of SufB, SufC and SufD. The interaction with SufE is required to mediate the direct transfer of the sulfur atom from the S-sulfanylcysteine. It depends on pyridoxal 5'-phosphate as a cofactor.

It is found in the cytoplasm. It carries out the reaction (sulfur carrier)-H + L-cysteine = (sulfur carrier)-SH + L-alanine. The catalysed reaction is L-selenocysteine + AH2 = hydrogenselenide + L-alanine + A + H(+). Its pathway is cofactor biosynthesis; iron-sulfur cluster biosynthesis. Functionally, cysteine desulfurases mobilize the sulfur from L-cysteine to yield L-alanine, an essential step in sulfur metabolism for biosynthesis of a variety of sulfur-containing biomolecules. Component of the suf operon, which is activated and required under specific conditions such as oxidative stress and iron limitation. Acts as a potent selenocysteine lyase in vitro, that mobilizes selenium from L-selenocysteine. Selenocysteine lyase activity is however unsure in vivo. The sequence is that of Cysteine desulfurase from Pectobacterium atrosepticum (strain SCRI 1043 / ATCC BAA-672) (Erwinia carotovora subsp. atroseptica).